A 324-amino-acid chain; its full sequence is Polyprenol dehydrogenase (324 aa).

Tyrosine 206 (proton acceptor) is an active-site residue. NAD(+) is bound by residues tyrosine 206, lysine 210, and threonine 243.

It belongs to the short-chain dehydrogenases/reductases (SDR) family.

It is found in the lipid droplet. It carries out the reaction a di-trans,poly-cis-polyprenol + NAD(+) = a di-trans,poly-cis-polyprenal + NADH + H(+). The enzyme catalyses a di-trans,poly-cis-polyprenol + NADP(+) = a di-trans,poly-cis-polyprenal + NADPH + H(+). It catalyses the reaction a di-trans,poly-cis-dolichol + NADP(+) = a di-trans,poly-cis-dolichal + NADPH + H(+). The catalysed reaction is a di-trans,poly-cis-dolichol + NAD(+) = a di-trans,poly-cis-dolichal + NADH + H(+). It functions in the pathway protein modification; protein glycosylation. Functionally, oxidoreductase that plays a key role in early steps of protein N-linked glycosylation by mediating two non-consecutive steps in dolichol biosynthesis. Acts both as a NAD(+)-dependent dehydrogenase and as a NADPH-dependent reductase during the conversion of polyprenol into dolichol. First catalyzes the NAD(+)-dependent dehydrogenation of polyprenol into polyprenal; polyprenal is then reduced into dolichal by srd5a3. It then catalyzes the NADPH-dependent reduction of dolichal into dolichol. The chain is Polyprenol dehydrogenase from Danio rerio (Zebrafish).